The primary structure comprises 537 residues: Inositol phosphorylceramide glucuronosyltransferase 1 (537 aa).

Residues 6–26 (TSLWVLLLALVSIQLNGSFGS) traverse the membrane as a helical segment. Mn(2+) contacts are provided by D124 and D126. Substrate contacts are provided by residues 124–126 (DAD), 153–155 (NSG), 180–184 (TGGDQ), and 248–255 (HYTLGPLK). H248 lines the Mn(2+) pocket. Transmembrane regions (helical) follow at residues 293–313 (DELVVKFLFLLPLCALLFCIY), 375–395 (VSVVVCFTAVLLSLGISFAIV), 406–426 (VLVYEWTFTIFFLLFGVFLLF), 468–488 (MAFLAIAAVSLPYILGITALF), and 494–514 (MVGLAIILAAFMTYASEHLAV).

Belongs to the glycosyltransferase 8 family. Glycogenin subfamily. The cofactor is Mn(2+). Expressed in seedlings, roots, leaves, stems and siliques.

The protein resides in the golgi apparatus membrane. The catalysed reaction is glucuronate acceptor + UDP-alpha-D-glucuronate = acceptor beta-D-glucuronoside + UDP + H(+). The enzyme catalyses a 1D-myo-inositol-1-phospho-N-[(R)-2-hydroxy-very-long-chain fatty acyl]-(R)-4-hydroxysphingoid base + UDP-alpha-D-glucuronate = an alpha-D-glucuronosyl-(1&lt;-&gt;6)-1D-myo-inositol-1-phospho-N-[(R)-2-hydroxy-very-long-chain fatty acyl]-(R)-4-hydroxysphingoid base + UDP + H(+). The protein operates within sphingolipid metabolism. Mediates the transfer of glucuronic acid (GlcA) from UDP-GlcA to glycosyl inositol phosphorylceramides (GIPCs). The formation of GIPCs sphingolipids is essential for pollen function, plant growth and defense. Required for global fitness. In Arabidopsis thaliana (Mouse-ear cress), this protein is Inositol phosphorylceramide glucuronosyltransferase 1.